Consider the following 101-residue polypeptide: Small ribosomal subunit protein uS14 (101 aa).

This sequence belongs to the universal ribosomal protein uS14 family. In terms of assembly, part of the 30S ribosomal subunit. Contacts proteins S3 and S10.

Binds 16S rRNA, required for the assembly of 30S particles and may also be responsible for determining the conformation of the 16S rRNA at the A site. This chain is Small ribosomal subunit protein uS14, found in Vibrio vulnificus (strain CMCP6).